The following is a 619-amino-acid chain: Probable ATP-dependent RNA helicase DDX59 (619 aa).

Residue Lys-26 forms a Glycyl lysine isopeptide (Lys-Gly) (interchain with G-Cter in SUMO2) linkage. The tract at residues 57–98 (SESCPFPSPGGQLAEVHSVSPEQGAKDSHPSEEPVKSFSKTQ) is disordered. A phosphoserine mark is found at Ser-64 and Ser-76. The segment covering 80 to 91 (GAKDSHPSEEPV) has biased composition (basic and acidic residues). The segment at 104 to 133 (GEPICVVCGRYGEYICDKTDEDVCSLECKA) adopts an HIT-type zinc-finger fold. The segment at 142–161 (KEEKSKLSNPQKADSEPESP) is disordered. Phosphoserine occurs at positions 156 and 160. Residues 203–231 (IDFEHCSLPEVLNHNLKKSGYEVPTPIQM) carry the Q motif motif. In terms of domain architecture, Helicase ATP-binding spans 234–405 (IPVGLLGRDI…SQLLHNPVRI (172 aa)). 247–254 (ADTGSGKT) contributes to the ATP binding site. A DEAD box motif is present at residues 353-356 (DEAD). The region spanning 416-579 (NVRQIILWVE…ILPPQLLNSP (164 aa)) is the Helicase C-terminal domain.

It belongs to the DEAD box helicase family. DDX59 subfamily. As to quaternary structure, interacts (via HIT-type zinc finger) with the RUVBL1/RUVBL2 complex in the presence of ADP. Expressed in fibroblasts (at protein level).

It is found in the cytoplasm. The protein localises to the nucleus. The enzyme catalyses ATP + H2O = ADP + phosphate + H(+). This is Probable ATP-dependent RNA helicase DDX59 (DDX59) from Homo sapiens (Human).